The sequence spans 239 residues: tRNA (guanine-N(7)-)-methyltransferase (239 aa).

The S-adenosyl-L-methionine site is built by Glu69, Glu94, Asp121, and Asp144. Residue Asp144 is part of the active site. Residue Lys148 participates in substrate binding. The interval 150–155 is interaction with RNA; it reads RHNKRR. Residues Asp180 and 217–220 contribute to the substrate site; that span reads TKFE.

It belongs to the class I-like SAM-binding methyltransferase superfamily. TrmB family. Monomer.

It carries out the reaction guanosine(46) in tRNA + S-adenosyl-L-methionine = N(7)-methylguanosine(46) in tRNA + S-adenosyl-L-homocysteine. The protein operates within tRNA modification; N(7)-methylguanine-tRNA biosynthesis. Its function is as follows. Catalyzes the formation of N(7)-methylguanine at position 46 (m7G46) in tRNA. The polypeptide is tRNA (guanine-N(7)-)-methyltransferase (Escherichia coli O6:H1 (strain CFT073 / ATCC 700928 / UPEC)).